The primary structure comprises 445 residues: Phosphoglucosamine mutase (445 aa).

The Phosphoserine intermediate role is filled by Ser-102. Mg(2+) contacts are provided by Ser-102, Asp-241, Asp-243, and Asp-245. Ser-102 is subject to Phosphoserine.

It belongs to the phosphohexose mutase family. It depends on Mg(2+) as a cofactor. In terms of processing, activated by phosphorylation.

The enzyme catalyses alpha-D-glucosamine 1-phosphate = D-glucosamine 6-phosphate. In terms of biological role, catalyzes the conversion of glucosamine-6-phosphate to glucosamine-1-phosphate. This Acinetobacter baumannii (strain ACICU) protein is Phosphoglucosamine mutase.